Consider the following 180-residue polypeptide: Hypoxanthine-guanine phosphoribosyltransferase (180 aa).

Residues K40, 99–107, K131, and D159 contribute to the GMP site; that span reads EDIVDSGLT. The active-site Proton acceptor is the D103. D159 contacts Mg(2+).

It belongs to the purine/pyrimidine phosphoribosyltransferase family. Requires Mg(2+) as cofactor.

The protein localises to the cytoplasm. It carries out the reaction IMP + diphosphate = hypoxanthine + 5-phospho-alpha-D-ribose 1-diphosphate. The enzyme catalyses GMP + diphosphate = guanine + 5-phospho-alpha-D-ribose 1-diphosphate. It participates in purine metabolism; IMP biosynthesis via salvage pathway; IMP from hypoxanthine: step 1/1. Converts guanine to guanosine monophosphate, and hypoxanthine to inosine monophosphate. Transfers the 5-phosphoribosyl group from 5-phosphoribosylpyrophosphate onto the purine. Plays a central role in the generation of purine nucleotides through the purine salvage pathway. This is Hypoxanthine-guanine phosphoribosyltransferase (hprT) from Dictyostelium discoideum (Social amoeba).